Here is a 48-residue protein sequence, read N- to C-terminus: Probable antitoxin PhoAT (48 aa).

Belongs to the PhoAT antitoxin family. As to quaternary structure, interacts with toxin PhoH2.

In terms of biological role, probable antitoxin component of a type II toxin-antitoxin (TA) system. The probable cognate antitoxin is PhoAT; the toxin gene can be expressed in the absence of the antitoxin gene in M.smegmatis strain mc(2)155. The polypeptide is Probable antitoxin PhoAT (Mycolicibacterium smegmatis (strain ATCC 700084 / mc(2)155) (Mycobacterium smegmatis)).